The following is a 285-amino-acid chain: Release factor glutamine methyltransferase (285 aa).

2 residues coordinate S-adenosyl-L-methionine: aspartate 143 and asparagine 189. 189–192 is a substrate binding site; that stretch reads NPPY.

It belongs to the protein N5-glutamine methyltransferase family. PrmC subfamily.

The enzyme catalyses L-glutaminyl-[peptide chain release factor] + S-adenosyl-L-methionine = N(5)-methyl-L-glutaminyl-[peptide chain release factor] + S-adenosyl-L-homocysteine + H(+). Functionally, methylates the class 1 translation termination release factors RF1/PrfA and RF2/PrfB on the glutamine residue of the universally conserved GGQ motif. The chain is Release factor glutamine methyltransferase from Clostridium acetobutylicum (strain ATCC 824 / DSM 792 / JCM 1419 / IAM 19013 / LMG 5710 / NBRC 13948 / NRRL B-527 / VKM B-1787 / 2291 / W).